The following is a 444-amino-acid chain: Methylenetetrahydrofolate--tRNA-(uracil-5-)-methyltransferase TrmFO (444 aa).

An FAD-binding site is contributed by Gly10–Gly15.

Belongs to the MnmG family. TrmFO subfamily. FAD serves as cofactor.

Its subcellular location is the cytoplasm. The catalysed reaction is uridine(54) in tRNA + (6R)-5,10-methylene-5,6,7,8-tetrahydrofolate + NADH + H(+) = 5-methyluridine(54) in tRNA + (6S)-5,6,7,8-tetrahydrofolate + NAD(+). The enzyme catalyses uridine(54) in tRNA + (6R)-5,10-methylene-5,6,7,8-tetrahydrofolate + NADPH + H(+) = 5-methyluridine(54) in tRNA + (6S)-5,6,7,8-tetrahydrofolate + NADP(+). Its function is as follows. Catalyzes the folate-dependent formation of 5-methyl-uridine at position 54 (M-5-U54) in all tRNAs. This chain is Methylenetetrahydrofolate--tRNA-(uracil-5-)-methyltransferase TrmFO, found in Streptococcus uberis (strain ATCC BAA-854 / 0140J).